Here is a 207-residue protein sequence, read N- to C-terminus: Ribosomal RNA large subunit methyltransferase E (207 aa).

Residues G60, W62, D80, D96, and D121 each contribute to the S-adenosyl-L-methionine site. K161 acts as the Proton acceptor in catalysis.

It belongs to the class I-like SAM-binding methyltransferase superfamily. RNA methyltransferase RlmE family.

Its subcellular location is the cytoplasm. It carries out the reaction uridine(2552) in 23S rRNA + S-adenosyl-L-methionine = 2'-O-methyluridine(2552) in 23S rRNA + S-adenosyl-L-homocysteine + H(+). Its function is as follows. Specifically methylates the uridine in position 2552 of 23S rRNA at the 2'-O position of the ribose in the fully assembled 50S ribosomal subunit. In Thioalkalivibrio sulfidiphilus (strain HL-EbGR7), this protein is Ribosomal RNA large subunit methyltransferase E.